A 182-amino-acid polypeptide reads, in one-letter code: Small ribosomal subunit protein uS4c (182 aa).

Positions 82 to 143 (MRLDNILFRL…KERSKVLIQN (62 aa)) constitute an S4 RNA-binding domain.

This sequence belongs to the universal ribosomal protein uS4 family. In terms of assembly, part of the 30S ribosomal subunit. Contacts protein S5. The interaction surface between S4 and S5 is involved in control of translational fidelity.

Its subcellular location is the plastid. It localises to the chloroplast. One of the primary rRNA binding proteins, it binds directly to 16S rRNA where it nucleates assembly of the body of the 30S subunit. In terms of biological role, with S5 and S12 plays an important role in translational accuracy. This is Small ribosomal subunit protein uS4c (rps4) from Neomarica sp. (strain Lejeune 1997).